A 112-amino-acid polypeptide reads, in one-letter code: Putative RNase TTE0752 (112 aa).

Active-site residues include Arg-74 and His-79. An RX(4)HXY motif motif is present at residues 74–81; that stretch reads RDKLIHEY. Tyr-81 carries the O-di-AMP-tyrosine modification.

This sequence belongs to the HepT RNase toxin family. As to quaternary structure, homodimer, probably forms a complex with cognate antitoxin TTE0751. Post-translationally, modified by cognate antitoxin TTE0751; probably at least 2 successive AMPylation events occur on Tyr-81.

In terms of biological role, probable toxic component of a putative type VII toxin-antitoxin (TA) system, probably an RNase. Probably neutralized by cognate antitoxin TTE0751. Neutralization may be due to AMPylation by TTE0751. The protein is Putative RNase TTE0752 of Caldanaerobacter subterraneus subsp. tengcongensis (strain DSM 15242 / JCM 11007 / NBRC 100824 / MB4) (Thermoanaerobacter tengcongensis).